The chain runs to 238 residues: Ribonuclease 3 (238 aa).

Residues 17–140 (YATLEKALGY…LMAGVYLEAG (124 aa)) form the RNase III domain. Glutamate 53 contributes to the Mg(2+) binding site. Residue aspartate 57 is part of the active site. The Mg(2+) site is built by serine 126 and glutamate 129. The active site involves glutamate 129. In terms of domain architecture, DRBM spans 167-236 (DYKTALQELT…AYQALQKLKE (70 aa)).

This sequence belongs to the ribonuclease III family. In terms of assembly, homodimer. Mg(2+) serves as cofactor.

It is found in the cytoplasm. The enzyme catalyses Endonucleolytic cleavage to 5'-phosphomonoester.. Functionally, digests double-stranded RNA. Involved in the processing of primary rRNA transcript to yield the immediate precursors to the large and small rRNAs (23S and 16S). Processes some mRNAs, and tRNAs when they are encoded in the rRNA operon. Processes pre-crRNA and tracrRNA of type II CRISPR loci if present in the organism. The chain is Ribonuclease 3 from Helicobacter pylori (strain Shi470).